Reading from the N-terminus, the 102-residue chain is MEKLQKMTSEKSLVIFSKNSCCMSHTIKTLFLDLGVNPTIYELDEINRGKEIEQALAQLGCSPTVPVVFIGGQLVGGANQVMSLHLNRSLIPMLKRVGALWL.

One can recognise a Glutaredoxin domain in the interval 1-101 (MEKLQKMTSE…PMLKRVGALW (101 aa)). A [2Fe-2S] cluster-binding site is contributed by C21. A Responsive for interaction with TGA factors motif is present at residues 99–102 (ALWL).

Belongs to the glutaredoxin family. CC-type subfamily.

It localises to the cytoplasm. The protein resides in the nucleus. Its function is as follows. May only reduce GSH-thiol disulfides, but not protein disulfides. The polypeptide is Monothiol glutaredoxin-S7 (GRXS7) (Arabidopsis thaliana (Mouse-ear cress)).